Reading from the N-terminus, the 308-residue chain is Putative S-adenosyl-L-methionine-dependent methyltransferase MAB_4585c (308 aa).

S-adenosyl-L-methionine is bound by residues Asp131 and 160-161 (DL).

This sequence belongs to the UPF0677 family.

Its function is as follows. Exhibits S-adenosyl-L-methionine-dependent methyltransferase activity. The chain is Putative S-adenosyl-L-methionine-dependent methyltransferase MAB_4585c from Mycobacteroides abscessus (strain ATCC 19977 / DSM 44196 / CCUG 20993 / CIP 104536 / JCM 13569 / NCTC 13031 / TMC 1543 / L948) (Mycobacterium abscessus).